Here is a 302-residue protein sequence, read N- to C-terminus: 5'-3' exonuclease (302 aa).

The 5'-3' exonuclease domain occupies 173 to 269; it reads IPKLIPDLLG…NITTKKIKML (97 aa).

5'-3' exonuclease acting preferentially on double-stranded DNA. The protein is 5'-3' exonuclease (pol) of Buchnera aphidicola subsp. Baizongia pistaciae (strain Bp).